The following is a 261-amino-acid chain: Orotidine 5'-phosphate decarboxylase (261 aa).

Substrate-binding positions include aspartate 34, 56 to 58 (KTH), 88 to 97 (DRKFADIGNT), tyrosine 214, and arginine 232. Lysine 90 (proton donor) is an active-site residue.

This sequence belongs to the OMP decarboxylase family.

It carries out the reaction orotidine 5'-phosphate + H(+) = UMP + CO2. It participates in pyrimidine metabolism; UMP biosynthesis via de novo pathway; UMP from orotate: step 2/2. This chain is Orotidine 5'-phosphate decarboxylase (URA3), found in Kodamaea ohmeri (Yeast).